The sequence spans 311 residues: Aurora kinase (311 aa).

The 281-residue stretch at 20–300 (FEIGRFLGRG…IEDILRHPFL (281 aa)) folds into the Protein kinase domain. ATP is bound at residue lysine 49. Catalysis depends on aspartate 143, which acts as the Proton acceptor. The tract at residues 189–216 (DFGWSVHHPTHGGRRRTQCGTLDYLPPE) is activation loop. The residue at position 205 (threonine 205) is a Phosphothreonine; by autocatalysis. The short motif at 280–299 (MLIRSPEARISIEDILRHPF) is the Destruction (D)-box element.

Belongs to the protein kinase superfamily. Ser/Thr protein kinase family. Aurora subfamily. In terms of assembly, interacts with EB1 (via C-terminal residues 101-238). Post-translationally, phosphorylated in mitosis and cytokinesis. Activated by autophosphorylation at Thr-205.

The protein resides in the nucleus. It is found in the cytoplasm. Its subcellular location is the cytoskeleton. The protein localises to the microtubule organizing center. It localises to the centrosome. The protein resides in the spindle. It is found in the spindle pole. Its subcellular location is the nucleus membrane. It catalyses the reaction L-seryl-[protein] + ATP = O-phospho-L-seryl-[protein] + ADP + H(+). It carries out the reaction L-threonyl-[protein] + ATP = O-phospho-L-threonyl-[protein] + ADP + H(+). With respect to regulation, activated by cell-cycle phase specific phosphorylation. Inhibited by ATP-competitive inhibitors N-[4-[[6-Methoxy-7-[3-(4-morpholinyl)propoxy]-4-quinazolinyl]amino]phenyl]benzamide (ZM447439) and cyclopropanecarboxylic acid-(3-(4-(3-trifluoromethylphenylamino)-pyrimidin-2-ylamino)-phenyl)-amide (CFPPA). Inhibition leads to reduced growth, increased cytokinesis, microtubular defects, and increased ploidy of the cells. Its function is as follows. Involved in regulation of the cell cycle. Required for mitotic cell division and cytokinesis. Based on its localization to centrosomes and spindle microtubules, as well as to various cytoskeletal components such as the median body, parental attachment disk, and anterior and posterior-lateral paraflagellar dense rods, may coordinate reorganization and segregation of tubulin-containing structures during mitosis and cytokinesis. May regulate microtubule disassembly by phosphorylating cytoskeletal proteins leading to their destabilization. Phosphorylates EB1 at 'Ser-148' in vitro. Phosphorylates histone H3 in vitro. This Giardia intestinalis (strain ATCC 50803 / WB clone C6) (Giardia lamblia) protein is Aurora kinase.